A 3131-amino-acid chain; its full sequence is Enniatin synthase (3131 aa).

The segment at 53–466 is condensation 1; that stretch reads ADDKQRAVGH…VEKVDMMTQE (414 aa). A disordered region spans residues 186-212; sequence NDEHPRQFETPDSSQATPEEDLQPNPS. The tract at residues 495–887 is adenylation 1; that stretch reads SQSPNKAAVA…GRMDSQVKIR (393 aa). A Carrier 1 domain is found at 1010 to 1086; it reads SSGTDTYTKL…GLKAIVIGTS (77 aa). O-(pantetheine 4'-phosphoryl)serine is present on S1047. Residues 1105–1534 are condensation 2; that stretch reads SYAQNRMWFL…ETCISVLPLT (430 aa). An adenylation 2 region spans residues 1563–1960; it reads FREQAAANPE…GRMDNQFKIR (398 aa). The interval 2021 to 2177 is S-adenosyl-L-methionine-dependent N-methyltransferase; that stretch reads EGWQDHFESG…YLAEVIDGLI (157 aa). Carrier domains are found at residues 2504–2578 and 2598–2671; these read FPIS…RQGL and APRT…ESSH. O-(pantetheine 4'-phosphoryl)serine occurs at positions 2538 and 2632. Residues 2718–3123 form a condensation 3 region; the sequence is QDVYPSTQMQ…RHVLEEVCKT (406 aa).

Belongs to the ATP-dependent AMP-binding enzyme family. Pantetheine 4'-phosphate serves as cofactor. In terms of processing, the N-terminus is blocked.

Its pathway is antibiotic biosynthesis; enniatin biosynthesis. Its activity is regulated as follows. The N-methylation activity is inhibited by S-adenosyl-L-homocysteine and sinefugin. Its function is as follows. Nonribosomal peptide synthetase that synthesizes enniatin by coupling three D-hydroxycarboxylic acids and three L-amino acids via amide and ester bonds in an alternating fashion. Whereas ESYN1 can accept different amino acids as precursors (L -valine, L-isoleucine or L-leucine), only one species of D-hydroxycarboxylic acid can be found in natural enniatin isolates (D-hydroxyisovaleric acid, D-Hiv). D-Hiv stems from L-valine deanimation by a valine aminotransferase to 2-keto-isovaleric acid (2-Kiv), which becomes subsequently reduced by a keto-isovaleric acid reductase (KivR) to D-Hiv. Peptide bond formation and N-methylation of the amino acid occur before three enzyme-bound dipeptidols are condensed to a hexapeptidol. This Fusarium equiseti (Fusarium scirpi) protein is Enniatin synthase.